We begin with the raw amino-acid sequence, 98 residues long: NADH-ubiquinone oxidoreductase chain 4L (98 aa).

Helical transmembrane passes span 1–21 (MPLIHINIMMAFIMSLVGLLM), 29–49 (ALLCLEGMMLSLFILTALLAL), and 61–81 (IILLVFAACEAAIGLALLVMI).

This sequence belongs to the complex I subunit 4L family. Core subunit of respiratory chain NADH dehydrogenase (Complex I) which is composed of 45 different subunits.

The protein resides in the mitochondrion inner membrane. It carries out the reaction a ubiquinone + NADH + 5 H(+)(in) = a ubiquinol + NAD(+) + 4 H(+)(out). Core subunit of the mitochondrial membrane respiratory chain NADH dehydrogenase (Complex I) which catalyzes electron transfer from NADH through the respiratory chain, using ubiquinone as an electron acceptor. Part of the enzyme membrane arm which is embedded in the lipid bilayer and involved in proton translocation. The sequence is that of NADH-ubiquinone oxidoreductase chain 4L (MT-ND4L) from Kogia breviceps (Pygmy sperm whale).